We begin with the raw amino-acid sequence, 450 residues long: Phosphoglucosamine mutase (450 aa).

The active-site Phosphoserine intermediate is Ser-101. Residues Ser-101, Asp-240, Asp-242, and Asp-244 each coordinate Mg(2+). Ser-101 carries the phosphoserine modification.

It belongs to the phosphohexose mutase family. Mg(2+) serves as cofactor. Activated by phosphorylation.

It catalyses the reaction alpha-D-glucosamine 1-phosphate = D-glucosamine 6-phosphate. Catalyzes the conversion of glucosamine-6-phosphate to glucosamine-1-phosphate. The polypeptide is Phosphoglucosamine mutase (Streptococcus equi subsp. equi (strain 4047)).